The primary structure comprises 170 residues: Class I hydrophobin E (170 aa).

A signal peptide spans 1-19; the sequence is MQLTTLLTGLISVLSVTTA. Intrachain disulfides connect Cys62–Cys126, Cys70–Cys117, Cys71–Cys105, and Cys127–Cys139.

The protein belongs to the fungal hydrophobin family.

The protein localises to the secreted. The protein resides in the cell wall. Its function is as follows. Aerial growth, conidiation, and dispersal of filamentous fungi in the environment rely upon a capability of their secreting small amphipathic proteins called hydrophobins (HPBs) with low sequence identity. Class I can self-assemble into an outermost layer of rodlet bundles on aerial cell surfaces, conferring cellular hydrophobicity that supports fungal growth, development and dispersal; whereas Class II form highly ordered films at water-air interfaces through intermolecular interactions but contribute nothing to the rodlet structure. In P.expansum, hydrophobins contribute to germination, tolerance to cold stress and mycotoxins patulin and citrinin production. The sequence is that of Class I hydrophobin E from Penicillium expansum (Blue mold rot fungus).